The primary structure comprises 215 residues: Myelin protein zero-like protein 2 (215 aa).

The N-terminal stretch at 1 to 26 is a signal peptide; the sequence is MYGKSPTRAVLFLLGLQLTALWPTAA. The 115-residue stretch at 27–141 folds into the Ig-like V-type domain; sequence VEIYTPRVLE…DGLIGEIQLS (115 aa). At 27–154 the chain is on the extracellular side; that stretch reads VEIYTPRVLE…TVRFSEIHFL (128 aa). Asn39 and Asn118 each carry an N-linked (GlcNAc...) asparagine glycan. Residues Cys47 and Cys123 are joined by a disulfide bond. A helical membrane pass occupies residues 155-175; that stretch reads ALAIGSACALMVIIVIVVVLF. Over 176–215 the chain is Cytoplasmic; sequence QHFRKKRRAERAHRVVEIKSKEEEKLNQEKKASVSLEYTD.

The protein belongs to the myelin P0 protein family.

The protein resides in the membrane. In terms of biological role, mediates homophilic cell-cell adhesion. This is Myelin protein zero-like protein 2 (MPZL2) from Bos taurus (Bovine).